Consider the following 1273-residue polypeptide: DNA-directed RNA polymerase subunit beta (1273 aa).

Positions 1252 to 1273 (ADDQDLVVSSNDEEVSENDERS) are disordered.

This sequence belongs to the RNA polymerase beta chain family. As to quaternary structure, the RNAP catalytic core consists of 2 alpha, 1 beta, 1 beta' and 1 omega subunit. When a sigma factor is associated with the core the holoenzyme is formed, which can initiate transcription.

The catalysed reaction is RNA(n) + a ribonucleoside 5'-triphosphate = RNA(n+1) + diphosphate. DNA-dependent RNA polymerase catalyzes the transcription of DNA into RNA using the four ribonucleoside triphosphates as substrates. The chain is DNA-directed RNA polymerase subunit beta from Dehalococcoides mccartyi (strain ATCC BAA-2100 / JCM 16839 / KCTC 5957 / BAV1).